The primary structure comprises 226 residues: Lipoprotein-releasing system ATP-binding protein LolD 1 (226 aa).

In terms of domain architecture, ABC transporter spans 6–226 (LRLDKVTRSF…TLREGKVVAA (221 aa)). 42–49 (GPSGAGKS) contacts ATP.

It belongs to the ABC transporter superfamily. Lipoprotein translocase (TC 3.A.1.125) family. The complex is composed of two ATP-binding proteins (LolD) and two transmembrane proteins (LolC and LolE).

Its subcellular location is the cell inner membrane. Its function is as follows. Part of the ABC transporter complex LolCDE involved in the translocation of mature outer membrane-directed lipoproteins, from the inner membrane to the periplasmic chaperone, LolA. Responsible for the formation of the LolA-lipoprotein complex in an ATP-dependent manner. This Rhodospirillum rubrum (strain ATCC 11170 / ATH 1.1.1 / DSM 467 / LMG 4362 / NCIMB 8255 / S1) protein is Lipoprotein-releasing system ATP-binding protein LolD 1.